Reading from the N-terminus, the 143-residue chain is Large ribosomal subunit protein uL13 (143 aa).

Belongs to the universal ribosomal protein uL13 family. As to quaternary structure, part of the 50S ribosomal subunit.

Functionally, this protein is one of the early assembly proteins of the 50S ribosomal subunit, although it is not seen to bind rRNA by itself. It is important during the early stages of 50S assembly. The protein is Large ribosomal subunit protein uL13 of Methylacidiphilum infernorum (isolate V4) (Methylokorus infernorum (strain V4)).